The primary structure comprises 214 residues: Putative 3-methyladenine DNA glycosylase (214 aa).

This sequence belongs to the DNA glycosylase MPG family.

This is Putative 3-methyladenine DNA glycosylase from Mycobacterium leprae (strain Br4923).